Here is a 456-residue protein sequence, read N- to C-terminus: Probable glycine dehydrogenase (decarboxylating) subunit 1 (456 aa).

The protein belongs to the GcvP family. N-terminal subunit subfamily. As to quaternary structure, the glycine cleavage system is composed of four proteins: P, T, L and H. In this organism, the P 'protein' is a heterodimer of two subunits.

It carries out the reaction N(6)-[(R)-lipoyl]-L-lysyl-[glycine-cleavage complex H protein] + glycine + H(+) = N(6)-[(R)-S(8)-aminomethyldihydrolipoyl]-L-lysyl-[glycine-cleavage complex H protein] + CO2. Functionally, the glycine cleavage system catalyzes the degradation of glycine. The P protein binds the alpha-amino group of glycine through its pyridoxal phosphate cofactor; CO(2) is released and the remaining methylamine moiety is then transferred to the lipoamide cofactor of the H protein. This chain is Probable glycine dehydrogenase (decarboxylating) subunit 1, found in Legionella pneumophila (strain Paris).